The primary structure comprises 443 residues: Chromosome partition protein MukF (443 aa).

The leucine-zipper stretch occupies residues L209 to I237.

This sequence belongs to the MukF family. As to quaternary structure, interacts, and probably forms a ternary complex, with MukE and MukB via its C-terminal region. The complex formation is stimulated by calcium or magnesium. It is required for an interaction between MukE and MukB.

The protein resides in the cytoplasm. It is found in the nucleoid. In terms of biological role, involved in chromosome condensation, segregation and cell cycle progression. May participate in facilitating chromosome segregation by condensation DNA from both sides of a centrally located replisome during cell division. Not required for mini-F plasmid partitioning. Probably acts via its interaction with MukB and MukE. Overexpression results in anucleate cells. It has a calcium binding activity. In Glaesserella parasuis serovar 5 (strain SH0165) (Haemophilus parasuis), this protein is Chromosome partition protein MukF.